Consider the following 132-residue polypeptide: Large ribosomal subunit protein uL14 (132 aa).

The protein belongs to the universal ribosomal protein uL14 family. In terms of assembly, part of the 50S ribosomal subunit. Forms a cluster with proteins L3 and L24e, part of which may contact the 16S rRNA in 2 intersubunit bridges.

Binds to 23S rRNA. Forms part of two intersubunit bridges in the 70S ribosome. This is Large ribosomal subunit protein uL14 from Methanosarcina mazei (strain ATCC BAA-159 / DSM 3647 / Goe1 / Go1 / JCM 11833 / OCM 88) (Methanosarcina frisia).